The following is a 307-amino-acid chain: Elongation factor Ts (307 aa).

The segment at 79-82 is involved in Mg(2+) ion dislocation from EF-Tu; that stretch reads TDFV.

It belongs to the EF-Ts family.

It is found in the cytoplasm. Functionally, associates with the EF-Tu.GDP complex and induces the exchange of GDP to GTP. It remains bound to the aminoacyl-tRNA.EF-Tu.GTP complex up to the GTP hydrolysis stage on the ribosome. This is Elongation factor Ts from Bartonella tribocorum (strain CIP 105476 / IBS 506).